The chain runs to 328 residues: Delta(3,5)-Delta(2,4)-dienoyl-CoA isomerase, mitochondrial (328 aa).

The N-terminal 26 residues, 1-26 (MAAGIVASRRLRDLLTRRLTASNYPG), are a transit peptide targeting the mitochondrion. Substrate contacts are provided by residues 116–120 (AGVDL) and glycine 174. An N6-succinyllysine modification is found at lysine 231. Phosphoserine is present on serine 268. The Microbody targeting signal signature appears at 326–328 (SKL). Residue lysine 327 is modified to N6-acetyllysine.

Belongs to the enoyl-CoA hydratase/isomerase family. As to quaternary structure, homohexamer.

It localises to the mitochondrion. Its subcellular location is the peroxisome. It carries out the reaction (3E,5Z)-octadienoyl-CoA = (2E,4E)-octadienoyl-CoA. The enzyme catalyses (3E,5Z,8Z,11Z,14Z)-eicosapentaenoyl-CoA = (2E,4E,8Z,11Z,14Z)-eicosapentaenoyl-CoA. The protein operates within lipid metabolism; fatty acid beta-oxidation. Functionally, isomerization of 3-trans,5-cis-dienoyl-CoA to 2-trans,4-trans-dienoyl-CoA. The sequence is that of Delta(3,5)-Delta(2,4)-dienoyl-CoA isomerase, mitochondrial (ECH1) from Pongo abelii (Sumatran orangutan).